Consider the following 394-residue polypeptide: Elongation factor Tu (394 aa).

Residues 10 to 204 (KPHVNVGTIG…HLDSYIPEPE (195 aa)) enclose the tr-type G domain. Residues 19–26 (GHVDHGKT) form a G1 region. 19–26 (GHVDHGKT) serves as a coordination point for GTP. A Mg(2+)-binding site is contributed by Thr-26. The segment at 60-64 (GITIN) is G2. A G3 region spans residues 81–84 (DCPG). Residues 81–85 (DCPGH) and 136–139 (NKCD) each bind GTP. Residues 136-139 (NKCD) are G4. The interval 174–176 (SAL) is G5.

It belongs to the TRAFAC class translation factor GTPase superfamily. Classic translation factor GTPase family. EF-Tu/EF-1A subfamily. As to quaternary structure, monomer.

The protein localises to the cytoplasm. The catalysed reaction is GTP + H2O = GDP + phosphate + H(+). Its function is as follows. GTP hydrolase that promotes the GTP-dependent binding of aminoacyl-tRNA to the A-site of ribosomes during protein biosynthesis. The protein is Elongation factor Tu of Haemophilus ducreyi (strain 35000HP / ATCC 700724).